The primary structure comprises 214 residues: Thiamine pyrophosphokinase (214 aa).

The protein belongs to the thiamine pyrophosphokinase family.

The catalysed reaction is thiamine + ATP = thiamine diphosphate + AMP + H(+). It functions in the pathway cofactor biosynthesis; thiamine diphosphate biosynthesis; thiamine diphosphate from thiamine: step 1/1. Catalyzes the ATP-dependent phosphorylation of thiamine to thiamine pyrophosphate. Is involved in thiamine salvage. This is Thiamine pyrophosphokinase from Bacillus subtilis (strain 168).